Reading from the N-terminus, the 382-residue chain is Queuine tRNA-ribosyltransferase (382 aa).

Catalysis depends on Asp-93, which acts as the Proton acceptor. Substrate-binding positions include 93 to 97 (DSGGF), Asp-147, Gln-191, and Gly-218. Positions 249–255 (GVGKPED) are RNA binding. The Nucleophile role is filled by Asp-268. An RNA binding; important for wobble base 34 recognition region spans residues 273-277 (TRNAR). The Zn(2+) site is built by Cys-306, Cys-308, Cys-311, and His-337.

The protein belongs to the queuine tRNA-ribosyltransferase family. Homodimer. Within each dimer, one monomer is responsible for RNA recognition and catalysis, while the other monomer binds to the replacement base PreQ1. Zn(2+) is required as a cofactor.

The enzyme catalyses 7-aminomethyl-7-carbaguanine + guanosine(34) in tRNA = 7-aminomethyl-7-carbaguanosine(34) in tRNA + guanine. Its pathway is tRNA modification; tRNA-queuosine biosynthesis. Functionally, catalyzes the base-exchange of a guanine (G) residue with the queuine precursor 7-aminomethyl-7-deazaguanine (PreQ1) at position 34 (anticodon wobble position) in tRNAs with GU(N) anticodons (tRNA-Asp, -Asn, -His and -Tyr). Catalysis occurs through a double-displacement mechanism. The nucleophile active site attacks the C1' of nucleotide 34 to detach the guanine base from the RNA, forming a covalent enzyme-RNA intermediate. The proton acceptor active site deprotonates the incoming PreQ1, allowing a nucleophilic attack on the C1' of the ribose to form the product. After dissociation, two additional enzymatic reactions on the tRNA convert PreQ1 to queuine (Q), resulting in the hypermodified nucleoside queuosine (7-(((4,5-cis-dihydroxy-2-cyclopenten-1-yl)amino)methyl)-7-deazaguanosine). The polypeptide is Queuine tRNA-ribosyltransferase (Haemophilus influenzae (strain ATCC 51907 / DSM 11121 / KW20 / Rd)).